The sequence spans 139 residues: Large ribosomal subunit protein uL13c (139 aa).

This sequence belongs to the universal ribosomal protein uL13 family. In terms of assembly, part of the 50S ribosomal subunit.

The protein resides in the plastid. Its subcellular location is the chloroplast. The sequence is that of Large ribosomal subunit protein uL13c from Trieres chinensis (Marine centric diatom).